A 161-amino-acid polypeptide reads, in one-letter code: MPKEVIVESFELDHTIVKAPYVRLISEEFGPQGDVITNFDVRLVQPNQAAIETAGLHTIEHLLAKLIRQRIDGMIDCSPFGCRTGFHLIMWGKHSSTDIAKIITSSLEEIATSITWEDVPGTTIESCGNYKDHSLFAAKEWAQLILKQGISDDPFNRHVTS.

His-57, His-61, and Cys-127 together coordinate Fe cation.

This sequence belongs to the LuxS family. As to quaternary structure, homodimer. The cofactor is Fe cation.

The catalysed reaction is S-(5-deoxy-D-ribos-5-yl)-L-homocysteine = (S)-4,5-dihydroxypentane-2,3-dione + L-homocysteine. Involved in the synthesis of autoinducer 2 (AI-2) which is secreted by bacteria and is used to communicate both the cell density and the metabolic potential of the environment. The regulation of gene expression in response to changes in cell density is called quorum sensing. Catalyzes the transformation of S-ribosylhomocysteine (RHC) to homocysteine (HC) and 4,5-dihydroxy-2,3-pentadione (DPD). The protein is S-ribosylhomocysteine lyase of Streptococcus equi subsp. equi (strain 4047).